We begin with the raw amino-acid sequence, 193 residues long: Orotate phosphoribosyltransferase (193 aa).

5-phospho-alpha-D-ribose 1-diphosphate-binding positions include R85, K89, and 111–119; that span reads DDVLTTGKS. Orotate contacts are provided by T115 and R143.

Belongs to the purine/pyrimidine phosphoribosyltransferase family. PyrE subfamily. As to quaternary structure, homodimer. Mg(2+) is required as a cofactor.

It carries out the reaction orotidine 5'-phosphate + diphosphate = orotate + 5-phospho-alpha-D-ribose 1-diphosphate. Its pathway is pyrimidine metabolism; UMP biosynthesis via de novo pathway; UMP from orotate: step 1/2. Catalyzes the transfer of a ribosyl phosphate group from 5-phosphoribose 1-diphosphate to orotate, leading to the formation of orotidine monophosphate (OMP). This Pyrobaculum aerophilum (strain ATCC 51768 / DSM 7523 / JCM 9630 / CIP 104966 / NBRC 100827 / IM2) protein is Orotate phosphoribosyltransferase.